The chain runs to 266 residues: DNA damage-regulated autophagy modulator protein 2 (266 aa).

Transmembrane regions (helical) follow at residues 8–28 (LSFL…FSYI), 53–73 (KCLF…TIYV), 88–108 (IIKL…GLSI), 118–138 (FAAH…YMFV), 160–180 (LLLV…SSVL), and 207–227 (ITTA…LTYI).

This sequence belongs to the DRAM/TMEM150 family. Expression is down-regulated in ovarian tumors (at protein level). Widely expressed with highest levels in placenta and heart. Expressed in the retina. Not detected in brain or thymus.

It is found in the lysosome membrane. Its subcellular location is the photoreceptor inner segment. The protein localises to the apical cell membrane. Functionally, plays a role in the initiation of autophagy. In the retina, might be involved in the process of photoreceptor cells renewal and recycling to preserve visual function. Induces apoptotic cell death when coexpressed with DRAM1. This is DNA damage-regulated autophagy modulator protein 2 (DRAM2) from Homo sapiens (Human).